The primary structure comprises 77 residues: Surfactant-associated protein 2 (77 aa).

The N-terminal stretch at 1–19 (MESLMRLFLLLALLSSSHA) is a signal peptide. N-linked (GlcNAc...) asparagine glycosylation occurs at Asn61.

N-glycosylated. As to expression, expressed in lung, and specifically in alveolar type II epithelial cells.

It is found in the secreted. The protein localises to the cytoplasmic vesicle. It localises to the secretory vesicle. Its subcellular location is the golgi apparatus. Putative surfactant protein. The polypeptide is Surfactant-associated protein 2 (Mus musculus (Mouse)).